The chain runs to 551 residues: Interleukin-2 receptor subunit beta (551 aa).

A signal peptide spans 1–26 (MAAPALSWRLPLLILLLPLATPWASA). Topologically, residues 27-240 (TVNGTSQFTC…TKPASLGKDT (214 aa)) are extracellular. Asparagine 29, asparagine 43, and asparagine 71 each carry an N-linked (GlcNAc...) asparagine glycan. Cysteine 36 and cysteine 46 are joined by a disulfide. A disulfide bridge links cysteine 74 with cysteine 86. The region spanning 134 to 234 (APISLQVVHV…QPLAFRTKPA (101 aa)) is the Fibronectin type-III domain. The N-linked (GlcNAc...) asparagine glycan is linked to asparagine 149. Residues 220–224 (WSPWS) carry the WSXWS motif motif. Residues 241 to 265 (IPWLGHLLVGLSGAFGFIILVYLLI) form a helical membrane-spanning segment. Residues 266-551 (NCRNTGPWLK…LQGQDPTHLV (286 aa)) lie on the Cytoplasmic side of the membrane. The Box 1 motif signature appears at 278–286 (LKCHTPDPS). 2 disordered regions span residues 393–412 (DEGV…QPLS) and 433–476 (SLLG…GPPT).

The protein belongs to the type I cytokine receptor family. Type 4 subfamily. As to quaternary structure, non-covalent dimer of an alpha and a beta subunit. IL2R exists in 3 different forms: a high affinity dimer, an intermediate affinity monomer (beta subunit), and a low affinity monomer (alpha subunit). The high and intermediate affinity forms also associate with a gamma subunit. Interacts with SHB upon interleukin stimulation.

It localises to the cell membrane. The protein localises to the cell surface. In terms of biological role, receptor for interleukin-2. This beta subunit is involved in receptor mediated endocytosis and transduces the mitogenic signals of IL2. Probably in association with IL15RA, involved in the stimulation of neutrophil phagocytosis by IL15. This is Interleukin-2 receptor subunit beta (IL2RB) from Pan troglodytes (Chimpanzee).